We begin with the raw amino-acid sequence, 370 residues long: Putative transposase InsL for insertion sequence element IS186A (370 aa).

The protein belongs to the transposase 11 family.

Involved in the transposition of the insertion sequence IS186. This chain is Putative transposase InsL for insertion sequence element IS186A (insL1), found in Escherichia coli (strain K12).